A 206-amino-acid polypeptide reads, in one-letter code: Protein-methionine-sulfoxide reductase heme-binding subunit MsrQ (206 aa).

Transmembrane regions (helical) follow at residues 14 to 34 (IKPLLFVAGLLPFARWFWLGA), 45 to 65 (FLTRSSGTWTLVCLLVTLAIT), 82 to 102 (MCGLFAFFYGSLHFLAWVWWD), 118 to 138 (PFITVGFAAFVLMAALAATST), 149 to 169 (WQTLHRAVYAIGLLAILHFWW), and 179 to 199 (QPLLYGSVLALLLGWRVAAWW).

Belongs to the MsrQ family. As to quaternary structure, heterodimer of a catalytic subunit (MsrP) and a heme-binding subunit (MsrQ). FMN is required as a cofactor. Requires heme b as cofactor.

It localises to the cell inner membrane. In terms of biological role, part of the MsrPQ system that repairs oxidized periplasmic proteins containing methionine sulfoxide residues (Met-O), using respiratory chain electrons. Thus protects these proteins from oxidative-stress damage caused by reactive species of oxygen and chlorine generated by the host defense mechanisms. MsrPQ is essential for the maintenance of envelope integrity under bleach stress, rescuing a wide series of structurally unrelated periplasmic proteins from methionine oxidation. MsrQ provides electrons for reduction to the reductase catalytic subunit MsrP, using the quinone pool of the respiratory chain. The protein is Protein-methionine-sulfoxide reductase heme-binding subunit MsrQ of Bordetella pertussis (strain Tohama I / ATCC BAA-589 / NCTC 13251).